A 122-amino-acid chain; its full sequence is Large ribosomal subunit protein uL14 (122 aa).

Belongs to the universal ribosomal protein uL14 family. In terms of assembly, part of the 50S ribosomal subunit. Forms a cluster with proteins L3 and L19. In the 70S ribosome, L14 and L19 interact and together make contacts with the 16S rRNA in bridges B5 and B8.

Functionally, binds to 23S rRNA. Forms part of two intersubunit bridges in the 70S ribosome. The protein is Large ribosomal subunit protein uL14 of Brucella anthropi (strain ATCC 49188 / DSM 6882 / CCUG 24695 / JCM 21032 / LMG 3331 / NBRC 15819 / NCTC 12168 / Alc 37) (Ochrobactrum anthropi).